The following is a 619-amino-acid chain: MEMRSAKLMNGRVFAGARALYRAAGVDGKDFGKPIIAIANSFDEFLPGHVHLNKVGRLISDAIKEAGGIPREFNTMAVDDGIAMGHTGMLYSLPSRDIIADTVEYQVNAHCADALICIPNCDKVVPGMLMAALRLNIPTVFVSGGPMEAGTTVLPDGTVKKNTDLIDVMYASADDNLNEEDLLAYEKTVCPTCGSCAGMFTANSMNCLTEAIGLALPGNGTILASHSYRKDLFKRAAEQVVKIAKQYYDDDDDSVLPRSIATKKAFENAMTMDVAMGGSTNTVLHILAMAQSADVDFTLDDIERISHTVPCICKASPSGEWEISDVHRAGGITGILGELDRAGKLHRDVHSIDYKSLEDKLNDWDIMRDTCTEEAKQMYLAAPGHIVSPEPWTHTTLFDSLDRDRVNGAIHDIDHPAVTEGGLAVLRGNLAPDGCVVKTAGVPKEIWTFRGPALVVESQEQAIEVILNDTLKPGMALVIRYEGPKGGPGMQEMLYPTSFVKGKGIGKQVAMLTDGRYSGGSSGLAIGHIAPEAANKGPIALIKNGDIINIDIPNRTVNVELSDEELAQRRAELEAGDGYVAHRDRKVSQALKAYAAFARSADKGATRDPELIDKLSGLA.

Asp-80 lines the Mg(2+) pocket. Residue Cys-121 participates in [2Fe-2S] cluster binding. Mg(2+)-binding residues include Asp-122 and Lys-123. The residue at position 123 (Lys-123) is an N6-carboxylysine. Cys-196 contributes to the [2Fe-2S] cluster binding site. Glu-492 contacts Mg(2+). The active-site Proton acceptor is the Ser-518.

It belongs to the IlvD/Edd family. In terms of assembly, homodimer. Requires [2Fe-2S] cluster as cofactor. Mg(2+) is required as a cofactor.

The enzyme catalyses (2R)-2,3-dihydroxy-3-methylbutanoate = 3-methyl-2-oxobutanoate + H2O. The catalysed reaction is (2R,3R)-2,3-dihydroxy-3-methylpentanoate = (S)-3-methyl-2-oxopentanoate + H2O. Its pathway is amino-acid biosynthesis; L-isoleucine biosynthesis; L-isoleucine from 2-oxobutanoate: step 3/4. The protein operates within amino-acid biosynthesis; L-valine biosynthesis; L-valine from pyruvate: step 3/4. Its function is as follows. Functions in the biosynthesis of branched-chain amino acids. Catalyzes the dehydration of (2R,3R)-2,3-dihydroxy-3-methylpentanoate (2,3-dihydroxy-3-methylvalerate) into 2-oxo-3-methylpentanoate (2-oxo-3-methylvalerate) and of (2R)-2,3-dihydroxy-3-methylbutanoate (2,3-dihydroxyisovalerate) into 2-oxo-3-methylbutanoate (2-oxoisovalerate), the penultimate precursor to L-isoleucine and L-valine, respectively. This chain is Dihydroxy-acid dehydratase, found in Bifidobacterium adolescentis (strain ATCC 15703 / DSM 20083 / NCTC 11814 / E194a).